The chain runs to 92 residues: MAKGSLNLQDLFLNQLRKEKVNVTIFLLSGFQLKGVIKGFDNFTLIVETDNNKQQLIYKHAISSIMPSKPINYMAQAQNNQQASQQSNNNQG.

Residues 10–71 enclose the Sm domain; that stretch reads DLFLNQLRKE…ISSIMPSKPI (62 aa). The disordered stretch occupies residues 73-92; sequence YMAQAQNNQQASQQSNNNQG. The span at 75 to 92 shows a compositional bias: low complexity; the sequence is AQAQNNQQASQQSNNNQG.

The protein belongs to the Hfq family. As to quaternary structure, homohexamer.

Functionally, RNA chaperone that binds small regulatory RNA (sRNAs) and mRNAs to facilitate mRNA translational regulation in response to envelope stress, environmental stress and changes in metabolite concentrations. Also binds with high specificity to tRNAs. In Caldicellulosiruptor bescii (strain ATCC BAA-1888 / DSM 6725 / KCTC 15123 / Z-1320) (Anaerocellum thermophilum), this protein is RNA-binding protein Hfq.